The following is a 216-amino-acid chain: 3-keto-L-gulonate-6-phosphate decarboxylase UlaD (216 aa).

Residue Asp11 participates in substrate binding. Mg(2+)-binding residues include Glu33 and Asp62. Substrate is bound at residue Arg192.

Belongs to the HPS/KGPDC family. KGPDC subfamily. As to quaternary structure, homodimer. Mg(2+) serves as cofactor.

It carries out the reaction 3-dehydro-L-gulonate 6-phosphate + H(+) = L-xylulose 5-phosphate + CO2. It participates in cofactor degradation; L-ascorbate degradation; D-xylulose 5-phosphate from L-ascorbate: step 2/4. Its function is as follows. Catalyzes the decarboxylation of 3-keto-L-gulonate-6-P into L-xylulose-5-P. Is involved in the anaerobic L-ascorbate utilization. The protein is 3-keto-L-gulonate-6-phosphate decarboxylase UlaD of Shigella boydii serotype 18 (strain CDC 3083-94 / BS512).